A 243-amino-acid chain; its full sequence is Adenosylcobinamide-GDP ribazoletransferase (243 aa).

5 helical membrane-spanning segments follow: residues 31–51, 57–77, 109–129, 135–155, and 188–208; these read LLFY…LNIA, LLLH…ALHL, IAVV…LALI, MALI…FLTT, and LVIA…VFIW.

This sequence belongs to the CobS family. Mg(2+) serves as cofactor.

It is found in the cell inner membrane. The enzyme catalyses alpha-ribazole + adenosylcob(III)inamide-GDP = adenosylcob(III)alamin + GMP + H(+). The catalysed reaction is alpha-ribazole 5'-phosphate + adenosylcob(III)inamide-GDP = adenosylcob(III)alamin 5'-phosphate + GMP + H(+). It functions in the pathway cofactor biosynthesis; adenosylcobalamin biosynthesis; adenosylcobalamin from cob(II)yrinate a,c-diamide: step 7/7. In terms of biological role, joins adenosylcobinamide-GDP and alpha-ribazole to generate adenosylcobalamin (Ado-cobalamin). Also synthesizes adenosylcobalamin 5'-phosphate from adenosylcobinamide-GDP and alpha-ribazole 5'-phosphate. The chain is Adenosylcobinamide-GDP ribazoletransferase from Pseudomonas fluorescens (strain Pf0-1).